Reading from the N-terminus, the 737-residue chain is Relaxin receptor 2 (737 aa).

Residues 1–399 (MWLLLHVILL…SSSEDLLANG (399 aa)) are Extracellular-facing. Residues 27–64 (LCPKGYFPCGNLTKCLPRAFHCDGVDDCGNGADEDNCG) form the LDL-receptor class A domain. 3 disulfides stabilise this stretch: Cys-28–Cys-41, Cys-35–Cys-54, and Cys-48–Cys-63. The N-linked (GlcNAc...) asparagine glycan is linked to Asn-37. N-linked (GlcNAc...) asparagine glycosylation occurs at Asn-121. LRR repeat units lie at residues 121–142 (NVTL…VFSR), 145–166 (ELRK…AFLG), 169–190 (NLQI…IFKD), 193–214 (QLAW…SFMG), 217–238 (SLFF…LCAQ), 241–262 (QLNW…TFLT), 265–286 (SLTV…TFSS), 289–310 (NLGE…LFSD), 313–334 (LLQK…QFGS), and 337–358 (QLQS…MFQP). Asn-257 is a glycosylation site (N-linked (GlcNAc...) asparagine). Residues Asn-318, Asn-350, and Asn-361 are each glycosylated (N-linked (GlcNAc...) asparagine). The helical transmembrane segment at 400–420 (ILRVSVWVIAFITCVGNFLVI) threads the bilayer. The Cytoplasmic segment spans residues 421-438 (AVRSLIKAENTTHAMSIK). The helical transmembrane segment at 439–459 (ILCCADCLMGVYLFSVGVFDI) threads the bilayer. At 460–478 (KYRGQYQKYALLWMESVPC) the chain is on the extracellular side. Cys-478 and Cys-556 form a disulfide bridge. Residues 479–501 (RLLGFLATLSTEVSVLLLTFLTL) form a helical membrane-spanning segment. Residues 502-520 (EKFLVIVFPFSNLRLGKRQ) are Cytoplasmic-facing. A helical membrane pass occupies residues 521 to 541 (TAVALASIWVVGFLIAAVPFT). The Extracellular portion of the chain corresponds to 542–575 (REDYFGNFYGKNGVCFPLHYDQAEDFGSRGYSLG). Residues 576-596 (IFLGVNLLAFLVIVISYVTMF) form a helical membrane-spanning segment. Residues 597–622 (CSIHKTALQTAEVRSHIGKEVAVANR) lie on the Cytoplasmic side of the membrane. The chain crosses the membrane as a helical span at residues 623–643 (FFFIVFSDAICWIPVFVVKIL). Residues 644–653 (SLLQVEIPGT) lie on the Extracellular side of the membrane. The helical transmembrane segment at 654–674 (ITSWIVVFFLPVNSALNPILY) threads the bilayer. The Cytoplasmic segment spans residues 675 to 737 (TLTTSFFKDK…GDSIMKPVSP (63 aa)).

This sequence belongs to the G-protein coupled receptor 1 family. Expressed in embryonic and adult gonads of males and females, as well in male gubernarculum. Expressed also in brain. Not detected in kidney, spleen and heart.

It localises to the cell membrane. Receptor for relaxin. The activity of this receptor is mediated by G proteins leading to stimulation of adenylate cyclase and an increase of cAMP. May also be a receptor for Leydig insulin-like peptide (INSL3). This is Relaxin receptor 2 (Rxfp2) from Mus musculus (Mouse).